Here is a 142-residue protein sequence, read N- to C-terminus: Chorion class A protein Ld19 (142 aa).

Residues 1 to 18 (MNSFALLLVCIQACLVQS) form the signal peptide.

It belongs to the chorion protein family.

Functionally, this protein is one of many from the eggshell of the gypsy moth. The sequence is that of Chorion class A protein Ld19 from Lymantria dispar (Gypsy moth).